A 398-amino-acid chain; its full sequence is Endoglucanase (398 aa).

An N-terminal signal peptide occupies residues Met1–Ala23. Glu58 serves as the catalytic Proton donor. The active-site Nucleophile is Asp119.

This sequence belongs to the glycosyl hydrolase 8 (cellulase D) family.

It localises to the secreted. It carries out the reaction Endohydrolysis of (1-&gt;4)-beta-D-glucosidic linkages in cellulose, lichenin and cereal beta-D-glucans.. It functions in the pathway glycan metabolism; bacterial cellulose biosynthesis. Functionally, hydrolyzes carboxymethylcellulose. In Pseudomonas fluorescens (strain SBW25), this protein is Endoglucanase (bcsZ).